Consider the following 224-residue polypeptide: Fibronectin type III domain-containing protein 9 (224 aa).

A Fibronectin type-III domain is found at 1–101 (MNIEVGNISY…FHTLDKSPLA (101 aa)). A helical membrane pass occupies residues 113–133 (LWVLMAILLACFTAVLAFICL). Positions 175-224 (LQGLPLVEMPRKNSRDGAELDPEANQDAPDAGALQRGGGDPPAILPHCGE) are disordered. Over residues 183–192 (MPRKNSRDGA) the composition is skewed to basic and acidic residues.

It localises to the membrane. This chain is Fibronectin type III domain-containing protein 9 (FNDC9), found in Homo sapiens (Human).